Consider the following 258-residue polypeptide: MKISQIEKKKHLYLIKLDNGDNLTVTEDTIIRFMLSKHMVIDSQQWEDIKSFAQFSYGKSKALGFIAFQQRSQKQVQDYLLKHQISPDLIPSIIDSLKQGKWIDDQQYVDTYVRQNSLTGDKGPLLLKQKLMLKGIASQLIEPVLAQTDFSSIAQKAAEKIYQKYQHKLPSKALTDKIIQGLLNKGFSYDLAKGIVSQLSLEQDSQHIEDLLDQEFDKLLRKYSRRYDGYQLKQKLYQALYRKGYDSDDITTKLNDYF.

It belongs to the RecX family.

It localises to the cytoplasm. Modulates RecA activity. This Streptococcus equi subsp. zooepidemicus (strain MGCS10565) protein is Regulatory protein RecX.